The chain runs to 87 residues: Small ribosomal subunit protein bS20 (87 aa).

The protein belongs to the bacterial ribosomal protein bS20 family.

In terms of biological role, binds directly to 16S ribosomal RNA. In Clostridium perfringens (strain ATCC 13124 / DSM 756 / JCM 1290 / NCIMB 6125 / NCTC 8237 / Type A), this protein is Small ribosomal subunit protein bS20.